Consider the following 801-residue polypeptide: Phenylalanine--tRNA ligase beta subunit (801 aa).

The tRNA-binding domain occupies 39-152 (ARAFSGVVVG…TDAPIGTDIR (114 aa)). The 76-residue stretch at 407–482 (PARAPITLPI…RIYGYDNIPS (76 aa)) folds into the B5 domain. Positions 460, 466, 469, and 470 each coordinate Mg(2+). In terms of domain architecture, FDX-ACB spans 706-799 (SKFPQVRRDI…LTVEHSAQLR (94 aa)).

It belongs to the phenylalanyl-tRNA synthetase beta subunit family. Type 1 subfamily. As to quaternary structure, tetramer of two alpha and two beta subunits. Requires Mg(2+) as cofactor.

The protein localises to the cytoplasm. It catalyses the reaction tRNA(Phe) + L-phenylalanine + ATP = L-phenylalanyl-tRNA(Phe) + AMP + diphosphate + H(+). The protein is Phenylalanine--tRNA ligase beta subunit of Psychrobacter arcticus (strain DSM 17307 / VKM B-2377 / 273-4).